Consider the following 101-residue polypeptide: TrfB transcriptional repressor protein (101 aa).

A DNA-binding region (H-T-H motif) is located at residues 37 to 56; it reads QATFATSLGLTRGAVSQAVH.

Functionally, in conjunction with KorB, inhibits the transcription of kilA, trfA and korAB operons. In conjunction with KorC is responsible for the negative control of kilC and kilE operons. This chain is TrfB transcriptional repressor protein (trfB), found in Escherichia coli.